We begin with the raw amino-acid sequence, 1365 residues long: Killer toxin-resistance protein 5 (1365 aa).

Positions 1–17 (MRLLALVLLLLCAPLRA) are cleaved as a signal peptide. N-linked (GlcNAc...) asparagine glycans are attached at residues N115, N228, N293, N457, N519, N523, N644, N870, N1091, N1150, and N1195. Residues 1334 to 1365 (FASSPGDEDVPGESVSSKYQDSDNAAPLHDEL) form a disordered region. Residues 1347–1356 (SVSSKYQDSD) show a composition bias toward polar residues. Positions 1362–1365 (HDEL) match the Prevents secretion from ER motif.

The protein to D.melanogaster UGGG.

The protein localises to the endoplasmic reticulum lumen. Functionally, required for (1-&gt;6)-beta-D-glucan synthesis and normal cell growth. This chain is Killer toxin-resistance protein 5 (KRE5), found in Saccharomyces cerevisiae (strain ATCC 204508 / S288c) (Baker's yeast).